The chain runs to 209 residues: Kynurenine formamidase (209 aa).

Residue Trp-18 participates in substrate binding. Zn(2+)-binding residues include His-48, His-52, and Asp-54. His-58 serves as the catalytic Proton donor/acceptor. Zn(2+)-binding residues include His-160 and Glu-172.

It belongs to the Cyclase 1 superfamily. KynB family. Homodimer. Requires Zn(2+) as cofactor.

It carries out the reaction N-formyl-L-kynurenine + H2O = L-kynurenine + formate + H(+). It participates in amino-acid degradation; L-tryptophan degradation via kynurenine pathway; L-kynurenine from L-tryptophan: step 2/2. Functionally, catalyzes the hydrolysis of N-formyl-L-kynurenine to L-kynurenine, the second step in the kynurenine pathway of tryptophan degradation. The sequence is that of Kynurenine formamidase from Paraburkholderia phymatum (strain DSM 17167 / CIP 108236 / LMG 21445 / STM815) (Burkholderia phymatum).